Reading from the N-terminus, the 271-residue chain is Putative pyruvate, phosphate dikinase regulatory protein 1 (271 aa).

Position 156-163 (156-163 (GVSRTSKT)) interacts with ADP.

Belongs to the pyruvate, phosphate/water dikinase regulatory protein family. PDRP subfamily.

The enzyme catalyses N(tele)-phospho-L-histidyl/L-threonyl-[pyruvate, phosphate dikinase] + ADP = N(tele)-phospho-L-histidyl/O-phospho-L-threonyl-[pyruvate, phosphate dikinase] + AMP + H(+). The catalysed reaction is N(tele)-phospho-L-histidyl/O-phospho-L-threonyl-[pyruvate, phosphate dikinase] + phosphate + H(+) = N(tele)-phospho-L-histidyl/L-threonyl-[pyruvate, phosphate dikinase] + diphosphate. Functionally, bifunctional serine/threonine kinase and phosphorylase involved in the regulation of the pyruvate, phosphate dikinase (PPDK) by catalyzing its phosphorylation/dephosphorylation. The polypeptide is Putative pyruvate, phosphate dikinase regulatory protein 1 (Staphylococcus saprophyticus subsp. saprophyticus (strain ATCC 15305 / DSM 20229 / NCIMB 8711 / NCTC 7292 / S-41)).